The chain runs to 270 residues: MADRINESHQRFLQALMSHGIMEGSAVRALHRHCCELHKVHYMHDKLDDFVGVLNRHLQPLFMTIEKGVGEEDGLTYYALVNRVENDITKMASDYAENELELFRKTMELIILSDNGFATSISILNLADELQSKKMKKKEVEQLLQSFVQEKWLIGRNGEYTLHTRCIMELEHYIRNTYQDVAKICNVCRKVAIQSQLCENCGIPLHLQCAGKYFHGKANPTCPNCNESWPHEIPDLNQVSSQGPSHSQTETVRGRNQRSKNTSTASRTSR.

Residues 185 to 226 (CNVCRKVAIQSQLCENCGIPLHLQCAGKYFHGKANPTCPNCN) form an RING-type; atypical zinc finger. Residues 236 to 270 (LNQVSSQGPSHSQTETVRGRNQRSKNTSTASRTSR) are disordered. 2 stretches are compositionally biased toward polar residues: residues 237-251 (NQVSSQGPSHSQTET) and 259-270 (SKNTSTASRTSR).

This sequence belongs to the NSE1 family. In terms of assembly, component of the SMC5-SMC6 complex.

Its subcellular location is the nucleus. It localises to the chromosome. It is found in the telomere. It carries out the reaction S-ubiquitinyl-[E2 ubiquitin-conjugating enzyme]-L-cysteine + [acceptor protein]-L-lysine = [E2 ubiquitin-conjugating enzyme]-L-cysteine + N(6)-ubiquitinyl-[acceptor protein]-L-lysine.. Functionally, RING-type zinc finger-containing E3 ubiquitin ligase that assembles with melanoma antigen protein (MAGE) to catalyze the direct transfer of ubiquitin from E2 ubiquitin-conjugating enzyme to a specific substrate. Within MAGE-RING ubiquitin ligase complex, MAGE stimulates and specifies ubiquitin ligase activity likely through recruitment and/or stabilization of the E2 ubiquitin-conjugating enzyme at the E3:substrate complex. Involved in maintenance of genome integrity, DNA damage response and DNA repair. In Xenopus laevis (African clawed frog), this protein is Non-structural maintenance of chromosomes element 1 homolog (nsmce1).